Reading from the N-terminus, the 957-residue chain is Translation initiation factor IF-2 (957 aa).

Disordered regions lie at residues 34-282 and 311-367; these read KSHS…RVVK and SQSL…TIAG. Positions 107-161 are enriched in pro residues; it reads PARPQPPQAPTRPTPPAPVAPKPVEPVAAKPPAPPAKPEPTPPRPVPTLVPPPTR. Over residues 163-188 the composition is skewed to basic and acidic residues; it reads TKKEEKVAATPPPRKELKEPPKKEKG. Pro residues predominate over residues 209 to 242; that stretch reads PPAPAKPPEMAPKPALPELQPPPKPVRAPNPPKP. Basic and acidic residues-rich tracts occupy residues 250–259 and 266–275; these read LDDKSVSKVI and KDFDEEESKR. The tr-type G domain maps to 444–617; the sequence is RRPPVVTIMG…LLVAEVEDLY (174 aa). Residues 453 to 460 are G1; sequence GHVDHGKT. Residue 453-460 coordinates GTP; sequence GHVDHGKT. Residues 478–482 are G2; it reads GITQH. Residues 503–506 are G3; sequence DTPG. GTP contacts are provided by residues 503-507 and 557-560; these read DTPGH and NKID. The G4 stretch occupies residues 557–560; sequence NKID. The G5 stretch occupies residues 593 to 595; that stretch reads SAL.

The protein belongs to the TRAFAC class translation factor GTPase superfamily. Classic translation factor GTPase family. IF-2 subfamily.

It is found in the cytoplasm. In terms of biological role, one of the essential components for the initiation of protein synthesis. Protects formylmethionyl-tRNA from spontaneous hydrolysis and promotes its binding to the 30S ribosomal subunits. Also involved in the hydrolysis of GTP during the formation of the 70S ribosomal complex. This chain is Translation initiation factor IF-2, found in Thermosynechococcus vestitus (strain NIES-2133 / IAM M-273 / BP-1).